The chain runs to 42 residues: Snaclec lebecetin subunit alpha (42 aa).

The region spanning 1-42 is the C-type lectin domain; it reads DQDCLPGWSSHEGHCYKVFNLDKTWEDAEKFCTEQPSNGHLV. A disulfide bond links Cys-4 and Cys-15.

Heterodimer of subunits alpha and beta; disulfide-linked. It depends on Ca(2+) as a cofactor. Post-translationally, glycosylated. As to expression, expressed by the venom gland.

The protein resides in the secreted. Functionally, binds to the platelet GPIb/IX/V receptor system and inhibits ristocetin-induced platelet aggregation in human platelet-rich plasma. Strongly inhibits platelet aggregation induced by ADP, calcium ionophore, thrombin and collagen. Does not inhibit U46619-induced platelet aggregation. This is Snaclec lebecetin subunit alpha from Macrovipera lebetinus (Levantine viper).